A 179-amino-acid chain; its full sequence is uncharacterized protein (179 aa).

This is an uncharacterized protein from Galliformes (FAdV-1).